The chain runs to 252 residues: Small ribosomal subunit protein uS3 (252 aa).

Positions 39 to 111 (IRKLINNFAK…DVNLNVLEVK (73 aa)) constitute a KH type-2 domain. Residues 226–252 (SQSSNNPNRRPRNFKGGNNNHVNAKKN) are disordered.

Belongs to the universal ribosomal protein uS3 family. Part of the 30S ribosomal subunit. Forms a tight complex with proteins S10 and S14.

Functionally, binds the lower part of the 30S subunit head. Binds mRNA in the 70S ribosome, positioning it for translation. The protein is Small ribosomal subunit protein uS3 of Aster yellows witches'-broom phytoplasma (strain AYWB).